A 328-amino-acid chain; its full sequence is Sin3 histone deacetylase corepressor complex component SDS3 (328 aa).

The segment at 1–64 (MSAAALLAPA…TDLAKHDEED (64 aa)) is disordered. Ser-2 bears the N-acetylserine mark. The interval 2–170 (SAAALLAPAP…IENEKLTMEL (169 aa)) is mediates interaction with USP17L2. The segment covering 10–21 (APAPAGAPPAPE) has biased composition (pro residues). Acidic residues-rich tracts occupy residues 23–37 (YPEE…EDDE) and 45–54 (SDEDTEDASE). Ser-32 and Ser-45 each carry phosphoserine. At Thr-49 the chain carries Phosphothreonine. Ser-53 carries the post-translational modification Phosphoserine. Residues 64 to 171 (DFVEMKEQMY…ENEKLTMELT (108 aa)) are a coiled coil. Glycyl lysine isopeptide (Lys-Gly) (interchain with G-Cter in SUMO2) cross-links involve residues Lys-69, Lys-178, and Lys-201. The tract at residues 226–252 (LKSPKRPASPSSPEHLPTTPAESPAQR) is disordered. Phosphoserine occurs at positions 228, 234, and 237. Thr-244 bears the Phosphothreonine mark.

Belongs to the SDS3 family. As to quaternary structure, homodimer. Component of the SIN3 histone deacetylase (HDAC) corepressor complex. Interacts with SIN3A. Interaction with SIN3B enhances the interaction between SIN3B and HDAC1 to form a complex. Interacts with HCFC1. Component of a mSin3A corepressor complex that contains SIN3A, SAP130, SUDS3/SAP45, ARID4B/SAP180, HDAC1 and HDAC2. Interacts with USP17L2; the interaction is direct. Interacts with FOXK2. In terms of processing, polyubiquitinated. 'Lys-63'-polyubiquitinated SUDS3 positively regulates histone deacetylation. Regulated through deubiquitination by USP17L2/USP17 that cleaves 'Lys-63'-linked ubiquitin chains.

It is found in the nucleus. Functionally, regulatory protein which represses transcription and augments histone deacetylase activity of HDAC1. May have a potential role in tumor suppressor pathways through regulation of apoptosis. May function in the assembly and/or enzymatic activity of the mSin3A corepressor complex or in mediating interactions between the complex and other regulatory complexes. The chain is Sin3 histone deacetylase corepressor complex component SDS3 (SUDS3) from Bos taurus (Bovine).